Reading from the N-terminus, the 415-residue chain is Gamma-glutamyl phosphate reductase (415 aa).

Belongs to the gamma-glutamyl phosphate reductase family.

Its subcellular location is the cytoplasm. The catalysed reaction is L-glutamate 5-semialdehyde + phosphate + NADP(+) = L-glutamyl 5-phosphate + NADPH + H(+). It participates in amino-acid biosynthesis; L-proline biosynthesis; L-glutamate 5-semialdehyde from L-glutamate: step 2/2. Catalyzes the NADPH-dependent reduction of L-glutamate 5-phosphate into L-glutamate 5-semialdehyde and phosphate. The product spontaneously undergoes cyclization to form 1-pyrroline-5-carboxylate. This Dictyoglomus thermophilum (strain ATCC 35947 / DSM 3960 / H-6-12) protein is Gamma-glutamyl phosphate reductase.